A 462-amino-acid polypeptide reads, in one-letter code: uncharacterized protein (462 aa).

A TRAM domain is found at 12 to 70 (MLKKNDIIQVAISDLSHEGAGVAKHDGFVFFVDNALPEEVIDMRVLKVNKNSGFGKVEA). Residues Q294, Y323, E344, and D392 each coordinate S-adenosyl-L-methionine. C419 serves as the catalytic Nucleophile.

This sequence belongs to the class I-like SAM-binding methyltransferase superfamily. RNA M5U methyltransferase family.

This is an uncharacterized protein from Streptococcus pyogenes serotype M3 (strain ATCC BAA-595 / MGAS315).